We begin with the raw amino-acid sequence, 475 residues long: Flotillin-like protein 4 (475 aa).

2 coiled-coil regions span residues 235–255 and 305–325; these read ENQREAEVAEANSELAKKKAA and QYETKVQEANWELYKKQKEAE.

This sequence belongs to the band 7/mec-2 family. Flotillin subfamily. As to expression, expressed in roots and nodules. Primarily expressed in vascular tissues. Upon induction of nodulation, expansion of expression in the root cortex in the region of elongating root hairs, which will eventually become colonized by bacteria. Expressed in the infection zone in nodules.

The protein localises to the membrane. The protein resides in the caveola. It localises to the cell membrane. Its function is as follows. May act as a scaffolding protein within caveolar membranes, functionally participating in formation of caveolae or caveolae-like vesicles. Required for normal infection threads initiation and elongation and nodulation. Probably involved in polar growth of the infection thread. The sequence is that of Flotillin-like protein 4 (FLOT4) from Medicago truncatula (Barrel medic).